A 295-amino-acid polypeptide reads, in one-letter code: Trimeric intracellular cation channel type A (295 aa).

The Lumenal segment spans residues 1–18 (MEVLDVLNLGEIAQYFSK). A helical membrane pass occupies residues 19 to 37 (MAMFPVFDVAYYIVSILYL). The Cytoplasmic portion of the chain corresponds to 38–51 (KYEPGAVEVSRRSP). A helical transmembrane segment spans residues 52–75 (VASWLCAMLYCFGSYILADIMLGV). Gly74 serves as a coordination point for Ca(2+). The Lumenal segment spans residues 76–86 (CPIDYFHNNSH). A helical membrane pass occupies residues 87–106 (ILLASAVWYLIFFCPLNLFY). Residues 107-144 (KCVAFMPVKLVLVALKEVVRTRKIAAGVHHAHHAYHHG) lie on the Cytoplasmic side of the membrane. Positions 122 and 126 each coordinate a 1,2-diacyl-sn-glycero-3-phospho-(1D-myo-inositol-4,5-bisphosphate). Residues 145–162 (WLIMVITGYVKGSGVALM) traverse the membrane as a helical segment. Residues 163-182 (SNFEQLLRGVWKPETNEVLN) are Lumenal-facing. Residues 183-199 (MSFPTKASLYGAILFTL) traverse the membrane as a helical segment. Topologically, residues 200–210 (QEAHVLPVSKS) are cytoplasmic. The chain crosses the membrane as a helical span at residues 211–227 (TLICLFTLFMVSSKVFM). Topologically, residues 228 to 236 (TARHSHGSP) are lumenal. Residues 237 to 255 (FALIESWVCHVLFGSPLGT) traverse the membrane as a helical segment. At 256–295 (EDAHDHHHAAPAAAPAPLSPAKNKEELSEGTRKRKSKKAE) the chain is on the cytoplasmic side. The segment at 259-295 (HDHHHAAPAAAPAPLSPAKNKEELSEGTRKRKSKKAE) is disordered. Low complexity predominate over residues 265–276 (APAAAPAPLSPA). The segment covering 277–286 (KNKEELSEGT) has biased composition (basic and acidic residues).

The protein belongs to the TMEM38 family. As to quaternary structure, homotrimer; conformation seems to be controled by binding to diacylglycerol (DAG).

Its subcellular location is the sarcoplasmic reticulum membrane. The protein resides in the nucleus membrane. The catalysed reaction is K(+)(in) = K(+)(out). Channel activity is activated by a change of voltage within the sarcoplasmic reticulum lumen and blocked by luminal high Ca(2+) levels. Intracellular monovalent cation channel required for maintenance of rapid intracellular calcium release. Acts as a potassium counter-ion channel that functions in synchronization with calcium release from intracellular stores. Opened by a change of voltage within the sarcoplasmic reticulum lumen. The chain is Trimeric intracellular cation channel type A (tmem38a) from Danio rerio (Zebrafish).